The following is a 497-amino-acid chain: MVLAELGGRIMSAIQKMNNVTIIDEKALNDCLNEITRALLQSDVSFPLVKEMQTNIKKIVNLEDLAAGHNKRRIIEQAIFSELCKMLDPGKSAFAPKKAKPSVVMFVGLQGEVLEKPQLVPSMLIIIRRKGYKPALVCADTFRAGAFDQLKQNATKSKIPYYGSYTGSDPVKIAVEGVDRFKKENCDLIIVDTSGRHKQQASLFEEMRQISEATKPDLVIFVMDSSIGQTAFEQARAFKQTVAVGAVIITKMDGHAKGGGTLSAVAATKSPVIFIGTGEHMDEFEVFDAKPFVSRLLGNGDMSGFVNKLQEVVPKDQQPELLEMLSHGKFTLRIMYDQFQNMLNMGPLKEVFSMLPGMRAEMMPEGHEKESQAKIKRYMTMMDSMTNEELDSSNPKVFNESRIMRIARGSGRIVREVMEMLEEYKRLTTMWGKVKGLKNLEKGNMSALSKNKNSQQLSKVLPAQMLKQIGGMSGLQSLMKQMGSGKDLMGMFGGRDE.

The tract at residues 1-297 (MVLAELGGRI…DAKPFVSRLL (297 aa)) is G-domain. GTP contacts are provided by residues 108-117 (GLQGEVLEKP), 192-196 (DTSGR), and 250-253 (TKMD). Positions 298–497 (GNGDMSGFVN…LMGMFGGRDE (200 aa)) are M-domain.

The protein belongs to the GTP-binding SRP family. SRP54 subfamily. Component of a signal recognition particle (SRP) complex that consists of a 7SL RNA molecule of 300 nucleotides and six protein subunits: SRP72, SRP68, SRP54, SRP19, SRP14 and SRP9.

It is found in the cytoplasm. It localises to the endoplasmic reticulum. It carries out the reaction GTP + H2O = GDP + phosphate + H(+). Its function is as follows. Component of the signal recognition particle (SRP) complex, a ribonucleoprotein complex that mediates the cotranslational targeting of secretory and membrane proteins to the endoplasmic reticulum (ER). As part of the SRP complex, associates with the SRP receptor (SR) component SRPRA to target secretory proteins to the endoplasmic reticulum membrane. Binds to the signal sequence of presecretory proteins when they emerge from the ribosomes. Displays basal GTPase activity, and stimulates reciprocal GTPase activation of the SR subunit SRPRA. Forms a guanosine 5'-triphosphate (GTP)-dependent complex with the SR subunit SRPRA. SR compaction and GTPase mediated rearrangement of SR drive SRP-mediated cotranslational protein translocation into the ER. Requires the presence of SRP9/SRP14 and/or SRP19 to stably interact with RNA. In Arabidopsis thaliana (Mouse-ear cress), this protein is Signal recognition particle subunit SRP54 2 (SRP-54B).